A 153-amino-acid chain; its full sequence is Mitochondrial zinc maintenance protein 1, mitochondrial (153 aa).

This sequence belongs to the complex I LYR family. MZM1 subfamily. Interacts with RIP1.

It is found in the mitochondrion matrix. Functionally, assembly factor required for Rieske Fe-S protein RIP1 incorporation into the cytochrome b-c1 (CIII) complex. Functions as a chaperone, binding to this subunit within the mitochondrial matrix and stabilizing it prior to its translocation and insertion into the late CIII dimeric intermediate within the mitochondrial inner membrane. Modulates the mitochondrial matrix zinc pool. The protein is Mitochondrial zinc maintenance protein 1, mitochondrial (MZM1) of Ajellomyces capsulatus (strain G186AR / H82 / ATCC MYA-2454 / RMSCC 2432) (Darling's disease fungus).